A 663-amino-acid chain; its full sequence is Cyclic nucleotide-gated channel alpha-2 (663 aa).

The segment at 1 to 61 (MTEKANGVKS…QLAEMDAPQQ (61 aa)) is disordered. Residues 1–144 (MTEKANGVKS…PAGDWYYRWL (144 aa)) are Cytoplasmic-facing. Low complexity predominate over residues 12–23 (PANNHNHHAPPA). Residues 145–166 (FLIALPVLYNWCLLVARACFSD) form a helical membrane-spanning segment. Topologically, residues 167–176 (LQKGYYIVWL) are extracellular. A helical membrane pass occupies residues 177–197 (VLDYVSDVVYIADLFIRLRTG). The Cytoplasmic segment spans residues 198–222 (FLEQGLLVKDTKKLRDNYIHTMQFK). Residues 223-241 (LDVASIIPTDLIYFAVGIH) form a helical membrane-spanning segment. Over 242-246 (NPEVR) the chain is Extracellular. A helical membrane pass occupies residues 247-265 (FNRLLHFARMFEFFDRTET). Over 266–272 (RTSYPNI) the chain is Cytoplasmic. The segment at 270-378 (PNIFRISNLI…GNVGSMISNM (109 aa)) is ion conduction pathway. A helical transmembrane segment spans residues 273–296 (FRISNLILYILIIIHWNACIYYAI). Topologically, residues 297 to 319 (SKSIGFGVDTWVYPNITDPEYGY) are extracellular. A run of 2 helical transmembrane segments spans residues 320–354 (LSRE…LFVI) and 355–379 (FDFL…SNMN). Residues 337 to 340 (TIGE) are selectivity filter. Positions 380 to 456 (ATRAEFQAKI…STLKKVRIFQ (77 aa)) are C-linker. Topologically, residues 380 to 663 (ATRAEFQAKI…NSPEPPAEKP (284 aa)) are cytoplasmic. Residues 460-580 (AGLLVELVLK…EERGREILMK (121 aa)) are cyclic nucleotide-binding domain. Gly-520, Ser-523, Arg-536, and Thr-537 together coordinate 3',5'-cyclic GMP. 3',5'-cyclic AMP-binding residues include Arg-536 and Thr-537. Residues 597–651 (VQEKLEQLETNMDTLYTRFARLLAEYTGAQQKLKQRITVLETKMKQNNEDDSLSD) adopt a coiled-coil conformation. Residues 640–663 (MKQNNEDDSLSDGMNSPEPPAEKP) form a disordered region.

Belongs to the cyclic nucleotide-gated cation channel (TC 1.A.1.5) family. CNGA2 subfamily. In terms of assembly, the olfactory cyclic nucleotide-gated channel is an heterotetramer composed of CNGA2, CNGA4 and CNGB1b subunits with 2:1:1 stoichiometry. Olfactory neurons.

Its subcellular location is the cell projection. The protein resides in the cilium membrane. It carries out the reaction Ca(2+)(in) = Ca(2+)(out). The enzyme catalyses Na(+)(in) = Na(+)(out). It catalyses the reaction K(+)(in) = K(+)(out). The catalysed reaction is NH4(+)(in) = NH4(+)(out). It carries out the reaction Rb(+)(in) = Rb(+)(out). The enzyme catalyses Li(+)(in) = Li(+)(out). It catalyses the reaction Cs(+)(in) = Cs(+)(out). Pore-forming subunit of the olfactory cyclic nucleotide-gated channel. Operates in the cilia of olfactory sensory neurons where chemical stimulation of the odorant is converted to an electrical signal. Mediates odorant-induced cAMP-dependent Ca(2+) influx triggering neuron depolarization. The rise of intracellular Ca(2+) levels potentiates the olfactory response by activating Ca(2+)-dependent Cl(-) channels, but it also serves as a negative feedback signal to desensitize the channel for rapid adaptation to odorants. Conducts cAMP- and cGMP-gated ion currents, with permeability for monovalent and divalent cations. The chain is Cyclic nucleotide-gated channel alpha-2 from Bos taurus (Bovine).